The primary structure comprises 581 residues: Arginine--tRNA ligase (581 aa).

The 'HIGH' region motif lies at 126–136; the sequence is PNLAKEMHVGH.

This sequence belongs to the class-I aminoacyl-tRNA synthetase family. As to quaternary structure, monomer.

The protein resides in the cytoplasm. The catalysed reaction is tRNA(Arg) + L-arginine + ATP = L-arginyl-tRNA(Arg) + AMP + diphosphate. This is Arginine--tRNA ligase from Shewanella putrefaciens (strain CN-32 / ATCC BAA-453).